A 231-amino-acid polypeptide reads, in one-letter code: Aldehyde decarbonylase (231 aa).

The Fe cation site is built by E32, E60, H63, E115, and H147.

It belongs to the aldehyde decarbonylase family. Requires Binds 2 metal cations per subunit. The catalytic dinuclear metal-binding site could be either a di-iron or a manganese-iron cofactor. as cofactor.

The enzyme catalyses a long-chain fatty aldehyde + 2 NADPH + O2 + H(+) = a long-chain alkane + formate + 2 NADP(+) + H2O. Catalyzes the decarbonylation of fatty aldehydes to alkanes. Requires the presence of ferredoxin, ferredoxin reductase and NADPH for in vitro decarbonylase activity. Involved in the biosynthesis of alkanes, mainly heptadecane and pentadecane. The chain is Aldehyde decarbonylase from Synechococcus elongatus (strain ATCC 33912 / PCC 7942 / FACHB-805) (Anacystis nidulans R2).